The primary structure comprises 137 residues: Peptide methionine sulfoxide reductase MsrB (137 aa).

The region spanning 7–129 (PTENIEKLTD…NSASLNFVDD (123 aa)) is the MsrB domain. Residues Cys46, Cys49, Cys95, and Cys98 each coordinate Zn(2+). The active-site Nucleophile is the Cys118.

It belongs to the MsrB Met sulfoxide reductase family. The cofactor is Zn(2+).

It catalyses the reaction L-methionyl-[protein] + [thioredoxin]-disulfide + H2O = L-methionyl-(R)-S-oxide-[protein] + [thioredoxin]-dithiol. The sequence is that of Peptide methionine sulfoxide reductase MsrB from Yersinia enterocolitica serotype O:8 / biotype 1B (strain NCTC 13174 / 8081).